Here is a 454-residue protein sequence, read N- to C-terminus: GTPase Der (454 aa).

EngA-type G domains lie at 3-167 and 181-354; these read PVIT…GIAE and MKIA…AAAM. GTP contacts are provided by residues 9–16, 56–60, 119–122, 187–194, 234–238, and 299–302; these read GRPNVGKS, DTGGF, NKTE, DTAGL, and NKWD. In terms of domain architecture, KH-like spans 355–439; the sequence is AKLPTPRLTR…PLRIQMNTAK (85 aa).

The protein belongs to the TRAFAC class TrmE-Era-EngA-EngB-Septin-like GTPase superfamily. EngA (Der) GTPase family. As to quaternary structure, associates with the 50S ribosomal subunit.

Functionally, GTPase that plays an essential role in the late steps of ribosome biogenesis. The chain is GTPase Der from Polynucleobacter asymbioticus (strain DSM 18221 / CIP 109841 / QLW-P1DMWA-1) (Polynucleobacter necessarius subsp. asymbioticus).